Reading from the N-terminus, the 153-residue chain is Arginine repressor (153 aa).

The protein belongs to the ArgR family.

The protein resides in the cytoplasm. It participates in amino-acid biosynthesis; L-arginine biosynthesis [regulation]. Its function is as follows. Regulates arginine biosynthesis genes. This is Arginine repressor from Actinobacillus pleuropneumoniae serotype 7 (strain AP76).